Reading from the N-terminus, the 152-residue chain is UPF0266 membrane protein YobD (152 aa).

The next 3 membrane-spanning stretches (helical) occupy residues 6 to 26, 45 to 65, and 67 to 87; these read LVLI…QFIM, VDSV…VTSH, and AQMT…IFWI.

The protein belongs to the UPF0266 family.

The protein resides in the cell inner membrane. This Salmonella newport (strain SL254) protein is UPF0266 membrane protein YobD.